Consider the following 504-residue polypeptide: Amphoterin-induced protein 3 (504 aa).

The N-terminal stretch at 1–19 is a signal peptide; it reads MTWLVLLGTLLCMLRVGLG. The Extracellular segment spans residues 20–383; sequence TPDSEGFPPR…PRPEPEAFNT (364 aa). The region spanning 25-61 is the LRRNT domain; the sequence is GFPPRALHNCPYKCICAADLLSCTGLGLQDVPAELPA. Cystine bridges form between C34-C40 and C38-C47. LRR repeat units follow at residues 62 to 83, 86 to 107, 110 to 133, 134 to 155, 158 to 178, and 184 to 207; these read ATAD…WLAP, QLRA…VFVN, GLRL…DGLG, ALEK…AFHG, ALSH…DHLH, and HLLT…AALP. N107 is a glycosylation site (N-linked (GlcNAc...) asparagine). Residues 219-275 enclose the LRRCT domain; it reads NPLPCDCRLYHLLQRWHQRGLSAVRDFAREYVCLAFKVPASRVRFFQHSRVFENCSS. 3 disulfide bridges follow: C223-C251, C225-C273, and C300-C352. Residues N272, N301, N362, and N368 are each glycosylated (N-linked (GlcNAc...) asparagine). One can recognise an Ig-like C2-type domain in the interval 277–370; the sequence is PALGLERPEE…HNQTHEYNVS (94 aa). A helical membrane pass occupies residues 384 to 404; it reads GFTTLLGCAVGLVLVLLYLFA. At 405–504 the chain is on the cytoplasmic side; the sequence is PPCRCCRRAC…SIGSEGPMTT (100 aa). The tract at residues 422-448 is disordered; sequence TPSPLQELSAQSSVLSTTPPDAPSRKA. The span at 424-440 shows a compositional bias: polar residues; that stretch reads SPLQELSAQSSVLSTTP.

This sequence belongs to the immunoglobulin superfamily. AMIGO family. In terms of assembly, binds AMIGO1 or AMIGO2.

Its subcellular location is the membrane. May mediate heterophilic cell-cell interaction. May contribute to signal transduction through its intracellular domain. The polypeptide is Amphoterin-induced protein 3 (Homo sapiens (Human)).